The primary structure comprises 307 residues: UDP-N-acetylenolpyruvoylglucosamine reductase (307 aa).

The FAD-binding PCMH-type domain occupies 27 to 193 (RVGGPADVVF…LDAVFEGLAD (167 aa)). Arg-172 is an active-site residue. Ser-222 (proton donor) is an active-site residue. The active site involves Glu-299.

The protein belongs to the MurB family. Requires FAD as cofactor.

The protein resides in the cytoplasm. It carries out the reaction UDP-N-acetyl-alpha-D-muramate + NADP(+) = UDP-N-acetyl-3-O-(1-carboxyvinyl)-alpha-D-glucosamine + NADPH + H(+). Its pathway is cell wall biogenesis; peptidoglycan biosynthesis. Functionally, cell wall formation. This is UDP-N-acetylenolpyruvoylglucosamine reductase from Caulobacter sp. (strain K31).